The primary structure comprises 409 residues: Aspartate aminotransferase, cytoplasmic (409 aa).

At S2 the chain carries N-acetylserine. G38, W138, and N191 together coordinate L-aspartate. K255 carries the N6-(pyridoxal phosphate)lysine modification. An L-aspartate-binding site is contributed by R383. Position 385 is a phosphoserine (S385).

The protein belongs to the class-I pyridoxal-phosphate-dependent aminotransferase family. As to quaternary structure, homodimer. Requires pyridoxal 5'-phosphate as cofactor.

The protein resides in the cytoplasm. It carries out the reaction L-aspartate + 2-oxoglutarate = oxaloacetate + L-glutamate. Its function is as follows. Plays a key role in amino acid metabolism. This is Aspartate aminotransferase, cytoplasmic from Schizosaccharomyces pombe (strain 972 / ATCC 24843) (Fission yeast).